The primary structure comprises 876 residues: Monofunctional isopimaradiene synthase, chloroplastic (876 aa).

A chloroplast-targeting transit peptide spans 1-64 (MAMPSYSSLS…YLRLGSRKII (64 aa)). Residues D628, D632, N772, T776, and E780 each coordinate Mg(2+). Residues 628–632 (DDLYD) carry the DDXXD motif motif.

The protein belongs to the terpene synthase family. Tpsd subfamily. Mg(2+) serves as cofactor.

It localises to the plastid. The protein localises to the chloroplast. It carries out the reaction (+)-copalyl diphosphate = isopimara-7,15-diene + diphosphate. It functions in the pathway terpene metabolism; oleoresin biosynthesis. Its function is as follows. Involved in defensive oleoresin formation in conifers in response to insect attack or other injury. Involved in diterpene (C20) olefins biosynthesis. Monofunctional enzyme lacking the DXDD motif in the class II active site relevant for the cyclization of geranylgeranyl diphosphate (GGPP). Requires (+)-copalyl diphosphate ((+)-CPP) as substrate, but no activity with GGPP or ent-CPP. Isopimaradiene is the major products of the enzyme followed by sandaracopimaradiene. The polypeptide is Monofunctional isopimaradiene synthase, chloroplastic (Pinus banksiana (Jack pine)).